Here is a 20-residue protein sequence, read N- to C-terminus: Phenol-soluble modulin alpha 4 peptide (20 aa).

This sequence belongs to the phenol-soluble modulin alpha peptides family.

Functionally, peptide which can recruit, activate and subsequently lyse neutrophils, thus eliminating the main cellular defense against infection. This Staphylococcus aureus (strain bovine RF122 / ET3-1) protein is Phenol-soluble modulin alpha 4 peptide (psmA4).